The chain runs to 90 residues: Long neurotoxin 1 (90 aa).

Residues 1-21 form the signal peptide; the sequence is MKTLLLTLVVVTIVCLDVGNS. Disulfide bonds link C24–C42, C35–C63, C48–C52, C67–C78, and C79–C84.

This sequence belongs to the three-finger toxin family. Long-chain subfamily. Type II alpha-neurotoxin sub-subfamily. Expressed by the venom gland.

Its subcellular location is the secreted. In terms of biological role, binds with high affinity to muscular (alpha-1/CHRNA1) and neuronal (alpha-7/CHRNA7) nicotinic acetylcholine receptor (nAChR) and inhibits acetylcholine from binding to the receptor, thereby impairing neuromuscular and neuronal transmission. This is Long neurotoxin 1 from Austrelaps superbus (Lowland copperhead snake).